The primary structure comprises 147 residues: Siroheme decarboxylase NirG subunit (147 aa).

It belongs to the Ahb/Nir family. As to quaternary structure, probably forms a complex composed of NirD, NirL, NirG and NirH. All proteins are required for the total conversion of siroheme to didecarboxysiroheme.

The catalysed reaction is siroheme + 2 H(+) = 12,18-didecarboxysiroheme + 2 CO2. The protein operates within porphyrin-containing compound metabolism. Involved in heme d1 biosynthesis. Catalyzes the decarboxylation of siroheme into didecarboxysiroheme. This is Siroheme decarboxylase NirG subunit from Stutzerimonas stutzeri (Pseudomonas stutzeri).